A 71-amino-acid polypeptide reads, in one-letter code: Allergen Art v 2 (71 aa).

Glycosylated. High-mannose oligosaccharides (Man(5-9)GlcNAc(2)).

The sequence is that of Allergen Art v 2 from Artemisia vulgaris (Mugwort).